The primary structure comprises 188 residues: Ribosomal RNA small subunit methyltransferase G (188 aa).

S-adenosyl-L-methionine-binding positions include G69, F74, 119–120 (VQ), and R134.

This sequence belongs to the methyltransferase superfamily. RNA methyltransferase RsmG family.

It localises to the cytoplasm. It carries out the reaction guanosine(527) in 16S rRNA + S-adenosyl-L-methionine = N(7)-methylguanosine(527) in 16S rRNA + S-adenosyl-L-homocysteine. Functionally, specifically methylates the N7 position of guanine in position 527 of 16S rRNA. This is Ribosomal RNA small subunit methyltransferase G from Campylobacter jejuni subsp. jejuni serotype O:2 (strain ATCC 700819 / NCTC 11168).